We begin with the raw amino-acid sequence, 354 residues long: UDP-3-O-acylglucosamine N-acyltransferase (354 aa).

Catalysis depends on His-245, which acts as the Proton acceptor.

Belongs to the transferase hexapeptide repeat family. LpxD subfamily. Homotrimer.

The catalysed reaction is a UDP-3-O-[(3R)-3-hydroxyacyl]-alpha-D-glucosamine + a (3R)-hydroxyacyl-[ACP] = a UDP-2-N,3-O-bis[(3R)-3-hydroxyacyl]-alpha-D-glucosamine + holo-[ACP] + H(+). Its pathway is bacterial outer membrane biogenesis; LPS lipid A biosynthesis. Catalyzes the N-acylation of UDP-3-O-acylglucosamine using 3-hydroxyacyl-ACP as the acyl donor. Is involved in the biosynthesis of lipid A, a phosphorylated glycolipid that anchors the lipopolysaccharide to the outer membrane of the cell. This chain is UDP-3-O-acylglucosamine N-acyltransferase, found in Anaeromyxobacter dehalogenans (strain 2CP-C).